Consider the following 283-residue polypeptide: Polyamine aminopropyltransferase (283 aa).

The 237-residue stretch at 5-241 folds into the PABS domain; that stretch reads NNWYIEHFER…GWWSVTMARK (237 aa). Position 35 (Q35) interacts with S-methyl-5'-thioadenosine. Residues H66 and D90 each contribute to the spermidine site. S-methyl-5'-thioadenosine contacts are provided by residues D110 and 141 to 142; that span reads DG. The Proton acceptor role is filled by D160. 160-163 is a binding site for spermidine; it reads DSTD. P167 contributes to the S-methyl-5'-thioadenosine binding site.

It belongs to the spermidine/spermine synthase family. Homodimer or homotetramer.

It is found in the cytoplasm. The catalysed reaction is S-adenosyl 3-(methylsulfanyl)propylamine + putrescine = S-methyl-5'-thioadenosine + spermidine + H(+). It participates in amine and polyamine biosynthesis; spermidine biosynthesis; spermidine from putrescine: step 1/1. Functionally, catalyzes the irreversible transfer of a propylamine group from the amino donor S-adenosylmethioninamine (decarboxy-AdoMet) to putrescine (1,4-diaminobutane) to yield spermidine. This chain is Polyamine aminopropyltransferase, found in Stenotrophomonas maltophilia (strain K279a).